The primary structure comprises 147 residues: Deoxyuridine 5'-triphosphate nucleotidohydrolase (147 aa).

Substrate contacts are provided by residues Arg68–Gly70, Asn81, and Thr85–Asp87.

This sequence belongs to the dUTPase family. Mg(2+) is required as a cofactor.

It carries out the reaction dUTP + H2O = dUMP + diphosphate + H(+). It participates in pyrimidine metabolism; dUMP biosynthesis; dUMP from dCTP (dUTP route): step 2/2. Functionally, this enzyme is involved in nucleotide metabolism: it produces dUMP, the immediate precursor of thymidine nucleotides and it decreases the intracellular concentration of dUTP so that uracil cannot be incorporated into DNA. The chain is Deoxyuridine 5'-triphosphate nucleotidohydrolase from Solibacter usitatus (strain Ellin6076).